Here is a 426-residue protein sequence, read N- to C-terminus: Probable imidazolonepropionase (426 aa).

Tyrosine 159 and histidine 192 together coordinate 4-imidazolone-5-propanoate. Residue tyrosine 159 participates in N-formimidoyl-L-glutamate binding. Histidine 260 contacts Fe(3+). Residue histidine 260 coordinates Zn(2+). Glutamate 263 contacts 4-imidazolone-5-propanoate. Position 334 (aspartate 334) interacts with Fe(3+). Aspartate 334 is a Zn(2+) binding site. Asparagine 336 provides a ligand contact to N-formimidoyl-L-glutamate.

It belongs to the metallo-dependent hydrolases superfamily. HutI family. Zn(2+) serves as cofactor. Requires Fe(3+) as cofactor.

It catalyses the reaction 4-imidazolone-5-propanoate + H2O = N-formimidoyl-L-glutamate. Its pathway is amino-acid degradation; L-histidine degradation into L-glutamate; N-formimidoyl-L-glutamate from L-histidine: step 3/3. The polypeptide is Probable imidazolonepropionase (Amdhd1) (Mus musculus (Mouse)).